A 770-amino-acid chain; its full sequence is Signal transducer and activator of transcription 3 (770 aa).

The residue at position 2 (A2) is an N-acetylalanine. N6-acetyllysine is present on residues K49 and K87. An Essential for nuclear import motif is present at residues 150 to 162; the sequence is DVRKRVQDLEQKM. The SH2 domain maps to 580–670; that stretch reads WNEGYIMGFI…DATNILVSPL (91 aa). 3 positions are modified to allysine; alternate: K601, K615, and K631. K601, K615, and K631 each carry N6-acetyllysine; alternate. Y640 carries the phosphotyrosine; by TYK2 modification. K685 is modified (allysine; alternate). K685 carries the N6-acetyllysine; alternate modification. Y705 bears the Phosphotyrosine; by FER and PTK6 mark. The residue at position 707 (K707) is an N6-acetyllysine. T714 carries the phosphothreonine modification. S727 bears the Phosphoserine; by DYRK2, NLK, NEK6, IRAK1, RPS6KA5, ZIPK/DAPK3 and PKC/PRKCE mark.

It belongs to the transcription factor STAT family. In terms of assembly, forms a homodimer or a heterodimer with a related family member (at least STAT1). Component of a promoter-binding complex composed of STAT3, NFATC3 and NFATC4; complex formation is enhanced by calcineurin. Interacts with IL31RA, NCOA1, PELP1, SIPAR, SOCS7, STATIP1 and TMF1. Interacts with IL23R in presence of IL23. Interacts (via SH2 domain) with NLK. Interacts with ARL2BP; the interaction is enhanced by LIF and JAK1 expression. Interacts with KPNA4 and KPNA5; KPNA4 may be the primary mediator of nuclear import. Interacts with CAV2; the interaction is increased on insulin-induced tyrosine phosphorylation of CAV2 and leads to STAT3 activation. Interacts with ARL2BP; interaction is enhanced with ARL2. Interacts with NEK6. Binds to CDK9 when activated and nuclear. Interacts with BMX. Interacts with ZIPK/DAPK3. Interacts with PIAS3; the interaction occurs on stimulation by IL6, CNTF or OSM and inhibits the DNA binding activity of STAT3. In prostate cancer cells, interacts with PRKCE and promotes DNA binding activity of STAT3. Interacts with STMN3, antagonizing its microtubule-destabilizing activity. Interacts with the 'Lys-129' acetylated form of BIRC5/survivin. Interacts with FER. Interacts (via SH2 domain) with EIF2AK2/PKR (via the kinase catalytic domain). Interacts with FGFR4. Interacts with INPP5F; the interaction is independent of STAT3 Tyr-705 phosphorylation status. Interacts with OCIAD1 and OCIAD2. Interacts (unphosphorylated or phosphorylated at Ser-727) with PHB1. Interacts and may form heterodimers with NHLH1. Found in a complex with SLC39A6, SLC39A10 and with the 'Ser-727' phosphorylated form of STAT3 throughout mitosis. Interacts (when acetylated) with EP300 (via bromo domain); interaction takes place following STAT3 acetylation by EP300 and promotes enhanceosome assembly. Interacts (when acetylated) with BRD2 (via bromo domain); interaction promotes STAT3 recruitment to chromatin and T-helper Th17 cell differentiation. Interacts with FAM220A/SIPAR; the interaction occurs in both the nucleus and the cytoplasm, is enhanced by IL6 and promotes STAT3 dephosphorylation. Interacts in both unphosphorylated and phosphorylated forms with FAM220A but interacts preferentially in the phosphorylated form in the nucleus. Interacts with PTPN2; the interaction is promoted by FAM220A and leads to STAT3 dephosphorylation which negatively regulates STAT3 transcriptional activator activity. In terms of processing, activated through tyrosine phosphorylation by BMX. Tyrosine phosphorylated in response to IL6, IL11, CNTF, LIF, KITLG/SCF, CSF1, EGF, PDGF, IFN-alpha and OSM. Activated KIT promotes phosphorylation on tyrosine residues and subsequent translocation to the nucleus. Tyrosine phosphorylated in response to constitutively activated FGFR1, FGFR2, FGFR3 and FGFR4. Phosphorylated on serine upon DNA damage, probably by ATM or ATR. Serine phosphorylation is important for the formation of stable DNA-binding STAT3 homodimers and maximal transcriptional activity. ARL2BP may participate in keeping the phosphorylated state of STAT3 within the nucleus. Tyrosine phosphorylated upon stimulation with EGF. Upon LPS challenge, phosphorylated within the nucleus by IRAK1. Phosphorylated on Ser-727 by RPS6KA5. Dephosphorylation on tyrosine residues by PTPN2 negatively regulates IL6/interleukin-6 signaling. Phosphorylation at Tyr-705 by FER, isoform M2 of PKM (PKM2) or PTK6 leads to an increase of its transcriptional activity. Phosphorylation at Tyr-705 is increased in the presence of calcineurin. Phosphorylation at Tyr-640 by TYK2 negatively regulates transcriptional activity. Acetylated on lysine residues by EP300/p300, promoting its activation. Acetylation at Lys-49 and Lys-87 by EP300/p300 promotes its activation. Acetylation at Lys-87 by EP300/p300 promotes its association with BRD2 and recruitment to chromatin. Deacetylated at Lys-49 and Lys-87 by HDAC1. Acetylation at Lys-685 by EP300/p300 promotes its homodimerization and activation. Deacetylated at Lys-685 by HDAC3. Acetylated on lysine residues by CREBBP. Deacetylation by LOXL3 leads to disrupt STAT3 dimerization and inhibit STAT3 transcription activity. Oxidation of lysine residues to allysine on STAT3 preferentially takes place on lysine residues that are acetylated. Post-translationally, some lysine residues are oxidized to allysine by LOXL3, leading to disrupt STAT3 dimerization and inhibit STAT3 transcription activity. Oxidation of lysine residues to allysine on STAT3 preferentially takes place on lysine residues that are acetylated. As to expression, detected in lung, heart, oviduct, ovary, uterus and kidney (at protein level). Expressed in cardiomyocytes (at protein level). Detected in ovary, oviduct, and at lower levels in uterus and lung.

It is found in the cytoplasm. Its subcellular location is the nucleus. Signal transducer and transcription activator that mediates cellular responses to interleukins, KITLG/SCF, LEP and other growth factors. Once activated, recruits coactivators, such as NCOA1 or MED1, to the promoter region of the target gene. May mediate cellular responses to activated FGFR1, FGFR2, FGFR3 and FGFR4. Upon activation of IL6ST/gp130 signaling by interleukin-6 (IL6), binds to the IL6-responsive elements identified in the promoters of various acute-phase protein genes. Activated by IL31 through IL31RA. Acts as a regulator of inflammatory response by regulating differentiation of naive CD4(+) T-cells into T-helper Th17 or regulatory T-cells (Treg): acetylation promotes its transcription activity and cell differentiation while deacetylation and oxidation of lysine residues by LOXL3 inhibits differentiation. Involved in cell cycle regulation by inducing the expression of key genes for the progression from G1 to S phase, such as CCND1. Mediates the effects of LEP on melanocortin production, body energy homeostasis and lactation. May play an apoptotic role by transctivating BIRC5 expression under LEP activation. Cytoplasmic STAT3 represses macroautophagy by inhibiting EIF2AK2/PKR activity. Plays a crucial role in basal beta cell functions, such as regulation of insulin secretion. Following JAK/STAT signaling activation and as part of a complex with NFATC3 and NFATC4, binds to the alpha-beta E4 promoter region of CRYAB and activates transcription in cardiomyocytes. Plays an important role in host defense in methicillin-resistant S.aureus lung infection by regulating the expression of the antimicrobial lectin REG3G. The protein is Signal transducer and activator of transcription 3 (Stat3) of Rattus norvegicus (Rat).